Here is a 617-residue protein sequence, read N- to C-terminus: MSEEQARAEAPAGARQRRRSELEGYSVSLASLKLSPMYPEEEQRTTGGISSTAHYLDGTFNYTTNPDATNSSVDYYSVAPEPQEENLQPLPNGSSSPPVFVPSSPQLSPFLGHPPAGQHTAQQVPYYLEPSGTSIYRSSVLASAGSRVELCSAPGRQDVYTAVGASGPSGASGPSGAIGLVKEIRYCSVCSDYASGYHYGVWSCEGCKAFFKRSIQGHNDYVCPATNQCTIDRNRRKSCQACRLRKCYEVGMMKGGFRKERGGRIIKHNRRPSGLKERERGYSKAQSGSDVREALPQDGQSSSGIGGGVADVVCMSPEQVLLLLLRAEPPTLCSRQKHSRPYSELTIMSLLTNMADRELVHMIAWAKKVPGFQDLSLHDQVQLLESSWLEILMIGLIWRSIYTPGKLIFAQDLILDKSEGECVEGMAEIFDMLLATVARFRTLKLKSEEFVCLKAIILLNSGAFSFCSSPVEPLRDGFMVQCMMDNITDALIYYISQSGISVQLQSRRQAQLLLLLSHIRHMSYKGMEHLYSMKCKNKVPLYDLLLEMLDAHRLRPLGKVPRIWADRVSSSPTTTATTPTTNTTTTTTTTTHHPSNGSTCPADLPSNPPGPGQSPSP.

The disordered stretch occupies residues 1 to 54; that stretch reads MSEEQARAEAPAGARQRRRSELEGYSVSLASLKLSPMYPEEEQRTTGGISSTAH. The tract at residues 1-186 is modulating; sequence MSEEQARAEA…AIGLVKEIRY (186 aa). NR C4-type zinc fingers lie at residues 187–207 and 223–247; these read CSVC…CEGC and CPAT…LRKC. A DNA-binding region (nuclear receptor) is located at residues 187–252; the sequence is CSVCSDYASG…RLRKCYEVGM (66 aa). The segment at 253–315 is hinge; the sequence is MKGGFRKERG…GGGVADVVCM (63 aa). The segment at 269-303 is disordered; the sequence is NRRPSGLKERERGYSKAQSGSDVREALPQDGQSSS. In terms of domain architecture, NR LBD spans 316–552; the sequence is SPEQVLLLLL…DLLLEMLDAH (237 aa). The disordered stretch occupies residues 568-617; the sequence is VSSSPTTTATTPTTNTTTTTTTTTHHPSNGSTCPADLPSNPPGPGQSPSP. The span at 573-591 shows a compositional bias: low complexity; sequence TTTATTPTTNTTTTTTTTT. Pro residues predominate over residues 606–617; that stretch reads SNPPGPGQSPSP.

Belongs to the nuclear hormone receptor family. NR3 subfamily. In terms of assembly, binds DNA as a homodimer. Can form a heterodimer with ER-beta. As to expression, ovary and testis.

Its subcellular location is the nucleus. The steroid hormones and their receptors are involved in the regulation of eukaryotic gene expression and affect cellular proliferation and differentiation in target tissues. This Ictalurus punctatus (Channel catfish) protein is Estrogen receptor (esr1).